We begin with the raw amino-acid sequence, 157 residues long: Endoribonuclease YbeY (157 aa).

Zn(2+) is bound by residues histidine 111, histidine 115, and histidine 121. The segment at glutamate 136–histidine 157 is disordered. Positions tyrosine 147–histidine 157 are enriched in acidic residues.

The protein belongs to the endoribonuclease YbeY family. The cofactor is Zn(2+).

Its subcellular location is the cytoplasm. Single strand-specific metallo-endoribonuclease involved in late-stage 70S ribosome quality control and in maturation of the 3' terminus of the 16S rRNA. The polypeptide is Endoribonuclease YbeY (Pseudomonas putida (strain ATCC 700007 / DSM 6899 / JCM 31910 / BCRC 17059 / LMG 24140 / F1)).